The chain runs to 303 residues: Putative ring-cleaving dioxygenase MhqE (303 aa).

2 VOC domains span residues 5 to 129 and 150 to 266; these read GLHH…IMED and GMKG…IATD. Fe cation-binding residues include histidine 8, histidine 215, and glutamate 262.

This sequence belongs to the extradiol ring-cleavage dioxygenase family. Fe(2+) is required as a cofactor.

The protein resides in the cytoplasm. Putative ring-cleavage dioxygenase that may contribute to the degradation of aromatic compounds. The protein is Putative ring-cleaving dioxygenase MhqE (mhqE) of Bacillus subtilis (strain 168).